The sequence spans 199 residues: Transgelin-3 (199 aa).

Positions A24–A136 constitute a Calponin-homology (CH) domain. Phosphoserine is present on S163. One copy of the Calponin-like repeat lies at I174–M199. Over residues M178–G188 the composition is skewed to polar residues. The segment at M178 to M199 is disordered.

It belongs to the calponin family.

This chain is Transgelin-3 (TAGLN3), found in Bos taurus (Bovine).